Reading from the N-terminus, the 395-residue chain is Beta-1,4-galactosyltransferase 3 (395 aa).

The Cytoplasmic segment spans residues 1–10; it reads MLRRLLERPC. The helical; Signal-anchor for type II membrane protein transmembrane segment at 11 to 31 threads the bilayer; it reads TLALLVGSQLAVMMYLSLGGF. Residues 32–395 are Lumenal-facing; the sequence is RSLSALFGRD…ANHTAPHGSH (364 aa). Residue asparagine 57 is glycosylated (N-linked (GlcNAc...) asparagine). An intrachain disulfide couples cysteine 79 to cysteine 121. Residue 132–136 coordinates UDP-alpha-D-galactose; it reads PHRAR. Asparagine 168 carries N-linked (GlcNAc...) asparagine glycosylation. UDP-alpha-D-galactose-binding positions include 171 to 173, 198 to 199, tyrosine 228, and tryptophan 260; these read FNR and VD. Residues cysteine 192 and cysteine 211 are joined by a disulfide bond. Aspartate 199 lines the Mn(2+) pocket. 262–265 contributes to the N-acetyl-D-glucosamine binding site; it reads GEDD. Mn(2+) is bound at residue histidine 293. 293–295 is a binding site for UDP-alpha-D-galactose; it reads HRG. Arginine 305 provides a ligand contact to N-acetyl-D-glucosamine. 2 N-linked (GlcNAc...) asparagine glycosylation sites follow: asparagine 339 and asparagine 387. The disordered stretch occupies residues 341–395; it reads TADIGTDPRGPRAPSGPRYPPGSSQAFRQEMLQRRPPARPGPLPTANHTAPHGSH.

It belongs to the glycosyltransferase 7 family. The cofactor is Mn(2+).

Its subcellular location is the golgi apparatus. It localises to the golgi stack membrane. It catalyses the reaction an N-acetyl-beta-D-glucosaminyl derivative + UDP-alpha-D-galactose = a beta-D-galactosyl-(1-&gt;4)-N-acetyl-beta-D-glucosaminyl derivative + UDP + H(+). It carries out the reaction N-acetyl-D-glucosamine + UDP-alpha-D-galactose = beta-D-galactosyl-(1-&gt;4)-N-acetyl-D-glucosamine + UDP + H(+). The enzyme catalyses a beta-D-GlcNAc-(1-&gt;3)-beta-D-Gal-(1-&gt;4)-beta-D-Glc-(1&lt;-&gt;1)-Cer(d18:1(4E)) + UDP-alpha-D-galactose = a neolactoside nLc4Cer(d18:1(4E)) + UDP + H(+). The catalysed reaction is a beta-D-glucosylceramide + UDP-alpha-D-galactose = a beta-D-galactosyl-(1-&gt;4)-beta-D-glucosyl-(1&lt;-&gt;1)-ceramide + UDP + H(+). It catalyses the reaction a neolactoside IV(3)-beta-GlcNAc-nLc4Cer + UDP-alpha-D-galactose = a neolactoside nLc6Cer + UDP + H(+). It functions in the pathway protein modification; protein glycosylation. In terms of biological role, responsible for the synthesis of complex-type N-linked oligosaccharides in many glycoproteins as well as the carbohydrate moieties of glycolipids. The chain is Beta-1,4-galactosyltransferase 3 from Rattus norvegicus (Rat).